A 249-amino-acid polypeptide reads, in one-letter code: Leucyl/phenylalanyl-tRNA--protein transferase (249 aa).

Residues 1–21 (MSRTLPHLLSSDPASPFPPAE) are disordered.

It belongs to the L/F-transferase family.

The protein localises to the cytoplasm. The enzyme catalyses N-terminal L-lysyl-[protein] + L-leucyl-tRNA(Leu) = N-terminal L-leucyl-L-lysyl-[protein] + tRNA(Leu) + H(+). It catalyses the reaction N-terminal L-arginyl-[protein] + L-leucyl-tRNA(Leu) = N-terminal L-leucyl-L-arginyl-[protein] + tRNA(Leu) + H(+). The catalysed reaction is L-phenylalanyl-tRNA(Phe) + an N-terminal L-alpha-aminoacyl-[protein] = an N-terminal L-phenylalanyl-L-alpha-aminoacyl-[protein] + tRNA(Phe). Functions in the N-end rule pathway of protein degradation where it conjugates Leu, Phe and, less efficiently, Met from aminoacyl-tRNAs to the N-termini of proteins containing an N-terminal arginine or lysine. In Xanthomonas campestris pv. campestris (strain 8004), this protein is Leucyl/phenylalanyl-tRNA--protein transferase.